The primary structure comprises 290 residues: ATP synthase gamma chain (290 aa).

Belongs to the ATPase gamma chain family. F-type ATPases have 2 components, CF(1) - the catalytic core - and CF(0) - the membrane proton channel. CF(1) has five subunits: alpha(3), beta(3), gamma(1), delta(1), epsilon(1). CF(0) has three main subunits: a, b and c.

The protein resides in the cell inner membrane. In terms of biological role, produces ATP from ADP in the presence of a proton gradient across the membrane. The gamma chain is believed to be important in regulating ATPase activity and the flow of protons through the CF(0) complex. The protein is ATP synthase gamma chain of Anaeromyxobacter sp. (strain Fw109-5).